The following is a 67-amino-acid chain: Large ribosomal subunit protein bL32 (67 aa).

Residues 1 to 19 are compositionally biased toward basic residues; the sequence is MAVPKRKMSRSNTRARRSQ. The segment at 1–21 is disordered; the sequence is MAVPKRKMSRSNTRARRSQWK.

Belongs to the bacterial ribosomal protein bL32 family.

The chain is Large ribosomal subunit protein bL32 from Clavibacter sepedonicus (Clavibacter michiganensis subsp. sepedonicus).